Here is a 344-residue protein sequence, read N- to C-terminus: Glucan endo-1,3-beta-glucosidase (344 aa).

A signal peptide spans 1-27 (MALTRNRPFVVVLLLGFVIMSTITIGA). Residue E123 is the Proton donor of the active site. The Nucleophile role is filled by E268.

Belongs to the glycosyl hydrolase 17 family.

It catalyses the reaction Hydrolysis of (1-&gt;3)-beta-D-glucosidic linkages in (1-&gt;3)-beta-D-glucans.. Functionally, implicated in the defense of plants against pathogens. The protein is Glucan endo-1,3-beta-glucosidase of Vitis vinifera (Grape).